The following is a 142-amino-acid chain: Large ribosomal subunit protein uL11 (142 aa).

The protein belongs to the universal ribosomal protein uL11 family. As to quaternary structure, part of the ribosomal stalk of the 50S ribosomal subunit. Interacts with L10 and the large rRNA to form the base of the stalk. L10 forms an elongated spine to which L12 dimers bind in a sequential fashion forming a multimeric L10(L12)X complex. One or more lysine residues are methylated.

In terms of biological role, forms part of the ribosomal stalk which helps the ribosome interact with GTP-bound translation factors. This chain is Large ribosomal subunit protein uL11, found in Enterobacter sp. (strain 638).